The primary structure comprises 129 residues: Large ribosomal subunit protein uL22 (129 aa).

It belongs to the universal ribosomal protein uL22 family. In terms of assembly, part of the 50S ribosomal subunit.

This protein binds specifically to 23S rRNA; its binding is stimulated by other ribosomal proteins, e.g. L4, L17, and L20. It is important during the early stages of 50S assembly. It makes multiple contacts with different domains of the 23S rRNA in the assembled 50S subunit and ribosome. In terms of biological role, the globular domain of the protein is located near the polypeptide exit tunnel on the outside of the subunit, while an extended beta-hairpin is found that lines the wall of the exit tunnel in the center of the 70S ribosome. In Aster yellows witches'-broom phytoplasma (strain AYWB), this protein is Large ribosomal subunit protein uL22.